A 443-amino-acid polypeptide reads, in one-letter code: Phosphoglucosamine mutase (443 aa).

Catalysis depends on serine 101, which acts as the Phosphoserine intermediate. Mg(2+) contacts are provided by serine 101, aspartate 239, aspartate 241, and aspartate 243. At serine 101 the chain carries Phosphoserine.

Belongs to the phosphohexose mutase family. It depends on Mg(2+) as a cofactor. Post-translationally, activated by phosphorylation.

The enzyme catalyses alpha-D-glucosamine 1-phosphate = D-glucosamine 6-phosphate. Functionally, catalyzes the conversion of glucosamine-6-phosphate to glucosamine-1-phosphate. This chain is Phosphoglucosamine mutase, found in Francisella tularensis subsp. tularensis (strain WY96-3418).